We begin with the raw amino-acid sequence, 552 residues long: 2,3-bisphosphoglycerate-independent phosphoglycerate mutase (552 aa).

The segment covering 1-25 (MTNTQQQSESIDDNQAQLSKQQNSD) has biased composition (polar residues). The interval 1–30 (MTNTQQQSESIDDNQAQLSKQQNSDNNKKV) is disordered. Residues Asp38 and Ser88 each coordinate Mn(2+). The Phosphoserine intermediate role is filled by Ser88. Residues His149, 179–180 (RD), Arg217, Arg223, 293–296 (RADR), and Lys373 contribute to the substrate site. Mn(2+) contacts are provided by Asp440, His444, Asp481, His482, and His500.

This sequence belongs to the BPG-independent phosphoglycerate mutase family. Monomer. Mn(2+) serves as cofactor.

The catalysed reaction is (2R)-2-phosphoglycerate = (2R)-3-phosphoglycerate. It participates in carbohydrate degradation; glycolysis; pyruvate from D-glyceraldehyde 3-phosphate: step 3/5. In terms of biological role, catalyzes the interconversion of 2-phosphoglycerate and 3-phosphoglycerate. This is 2,3-bisphosphoglycerate-independent phosphoglycerate mutase from Psychrobacter arcticus (strain DSM 17307 / VKM B-2377 / 273-4).